The primary structure comprises 576 residues: Potassium-transporting ATPase potassium-binding subunit (576 aa).

The next 12 membrane-spanning stretches (helical) occupy residues 3 to 23 (IFLD…ISPI), 68 to 88 (LYAL…TLLF), 137 to 157 (GLAL…LVLI), 179 to 199 (ILYV…SQGV), 267 to 287 (FEAF…GYMI), 294 to 314 (WFLY…QYYF), 339 to 359 (FGIG…CGAV), 369 to 389 (LGGL…GGVG), 391 to 411 (GLYG…LMIG), 430 to 450 (VVIT…ALYT), 495 to 515 (ITTG…VFYM), and 537 to 557 (LVFG…TFLP).

It belongs to the KdpA family. The system is composed of three essential subunits: KdpA, KdpB and KdpC.

It is found in the cell inner membrane. In terms of biological role, part of the high-affinity ATP-driven potassium transport (or Kdp) system, which catalyzes the hydrolysis of ATP coupled with the electrogenic transport of potassium into the cytoplasm. This subunit binds the periplasmic potassium ions and delivers the ions to the membrane domain of KdpB through an intramembrane tunnel. The protein is Potassium-transporting ATPase potassium-binding subunit of Hydrogenobaculum sp. (strain Y04AAS1).